We begin with the raw amino-acid sequence, 439 residues long: Histidinol dehydrogenase (439 aa).

Y132, Q194, and N217 together coordinate NAD(+). 3 residues coordinate substrate: S244, Q266, and H269. Zn(2+) contacts are provided by Q266 and H269. Residues E335 and H336 each act as proton acceptor in the active site. Substrate-binding residues include H336, D369, E423, and H428. Residue D369 coordinates Zn(2+). H428 lines the Zn(2+) pocket.

It belongs to the histidinol dehydrogenase family. Zn(2+) is required as a cofactor.

It catalyses the reaction L-histidinol + 2 NAD(+) + H2O = L-histidine + 2 NADH + 3 H(+). It functions in the pathway amino-acid biosynthesis; L-histidine biosynthesis; L-histidine from 5-phospho-alpha-D-ribose 1-diphosphate: step 9/9. Catalyzes the sequential NAD-dependent oxidations of L-histidinol to L-histidinaldehyde and then to L-histidine. In Schizosaccharomyces pombe (strain 972 / ATCC 24843) (Fission yeast), this protein is Histidinol dehydrogenase (his2).